A 255-amino-acid chain; its full sequence is Indole-3-glycerol phosphate synthase (255 aa).

This sequence belongs to the TrpC family.

The enzyme catalyses 1-(2-carboxyphenylamino)-1-deoxy-D-ribulose 5-phosphate + H(+) = (1S,2R)-1-C-(indol-3-yl)glycerol 3-phosphate + CO2 + H2O. The protein operates within amino-acid biosynthesis; L-tryptophan biosynthesis; L-tryptophan from chorismate: step 4/5. This is Indole-3-glycerol phosphate synthase from Streptococcus pneumoniae (strain 70585).